We begin with the raw amino-acid sequence, 295 residues long: Shikimate dehydrogenase (NADP(+)) (295 aa).

Shikimate-binding positions include 24 to 26 and T71; that span reads SRS. K75 acts as the Proton acceptor in catalysis. E87 contributes to the NADP(+) binding site. The shikimate site is built by N96 and D111. Residues 136–140, 160–165, and M233 contribute to the NADP(+) site; these read GAGGA and NRTASR. Residue Y235 participates in shikimate binding. NADP(+) is bound at residue G256.

This sequence belongs to the shikimate dehydrogenase family. Homodimer.

It catalyses the reaction shikimate + NADP(+) = 3-dehydroshikimate + NADPH + H(+). It functions in the pathway metabolic intermediate biosynthesis; chorismate biosynthesis; chorismate from D-erythrose 4-phosphate and phosphoenolpyruvate: step 4/7. Involved in the biosynthesis of the chorismate, which leads to the biosynthesis of aromatic amino acids. Catalyzes the reversible NADPH linked reduction of 3-dehydroshikimate (DHSA) to yield shikimate (SA). The chain is Shikimate dehydrogenase (NADP(+)) from Cupriavidus necator (strain ATCC 17699 / DSM 428 / KCTC 22496 / NCIMB 10442 / H16 / Stanier 337) (Ralstonia eutropha).